A 207-amino-acid polypeptide reads, in one-letter code: Cytochrome c biogenesis ATP-binding export protein CcmA (207 aa).

The 204-residue stretch at 4–207 (LEARELLCER…RISLTQTRAA (204 aa)) folds into the ABC transporter domain. 36–43 (GSNGAGKT) lines the ATP pocket.

The protein belongs to the ABC transporter superfamily. CcmA exporter (TC 3.A.1.107) family. The complex is composed of two ATP-binding proteins (CcmA) and two transmembrane proteins (CcmB).

The protein localises to the cell inner membrane. It catalyses the reaction heme b(in) + ATP + H2O = heme b(out) + ADP + phosphate + H(+). Part of the ABC transporter complex CcmAB involved in the biogenesis of c-type cytochromes; once thought to export heme, this seems not to be the case, but its exact role is uncertain. Responsible for energy coupling to the transport system. The protein is Cytochrome c biogenesis ATP-binding export protein CcmA of Shigella flexneri.